Consider the following 257-residue polypeptide: Beta-fibrinogenase mucrofibrase-1 (257 aa).

An N-terminal signal peptide occupies residues 1 to 18; it reads MVLIRVLANLLILQLSYA. Residues 19 to 24 constitute a propeptide that is removed on maturation; the sequence is QKSSEL. Positions 25 to 248 constitute a Peptidase S1 domain; it reads VIGGDECNIN…HLDWIKGIIA (224 aa). Disulfide bonds link Cys-31–Cys-162, Cys-49–Cys-65, Cys-97–Cys-255, Cys-141–Cys-209, Cys-173–Cys-188, and Cys-199–Cys-224. Catalysis depends on charge relay system residues His-64 and Asp-109. Ser-203 functions as the Charge relay system in the catalytic mechanism.

This sequence belongs to the peptidase S1 family. Snake venom subfamily. In terms of assembly, monomer. As to expression, expressed by the venom gland.

It is found in the secreted. Its function is as follows. Snake venom serine protease with strong beta-fibrinogenolytic activities, angiotensin I (AGT)-degrading activities and strong kallikrein-like activities in vitro, releasing bradykinin from kininogen (KNG1). Intravenous injection strongly lowers blood pressure in experimental rats, which may be explained by the action on angiotensin I and kininogen. The sequence is that of Beta-fibrinogenase mucrofibrase-1 from Protobothrops mucrosquamatus (Taiwan habu).